A 555-amino-acid polypeptide reads, in one-letter code: Cytochrome P450 monooxygeanse terQ (555 aa).

The helical transmembrane segment at 10-30 (VPAHAWPTITVAGAVMVVVLL) threads the bilayer. Cys-479 contacts heme. The tract at residues 535-555 (DAGNTARVDPGAPDGVASEPS) is disordered.

Belongs to the cytochrome P450 family. Heme is required as a cofactor.

The protein localises to the membrane. Its pathway is secondary metabolite biosynthesis. Cytochrome P450 monooxygeanse; part of the gene cluster that mediates the biosynthesis of terpendoles, indole-diterpene (IDT) mycotoxins including terpendole I, terpendole K, terpendole C, as well as the kinesin Eg5 inhibitor terpendole E. TerQ is a C11-hydroxylating enzyme that converts paspalline into terpendole E. Is also able to hydroxylate 13-desoxyterpendole I at C-13 to produce terpendole I. Terpendoles biosynthesis begins with the synthesis of geranylgeranyl diphosphate (GGPP) by a yet unidentified GGPP synthase. Condensation of indole-3-glycerol phosphate with GGPP by the prenyltransferase terC then forms 3-geranylgeranylindole (3-GGI), followed by epoxidation and cyclization of this intermediate (by the FAD-dependent monooxygeanse terM and the terpene cyclase terB) to form paspaline. The cytochrome monooxygenase terQ then hydroxylates paspalline at C-11 to yield terpendole E. The cytochrome monooxygenase terP converts terpendole E to 13-desoxyterpendole I, and terQ converts 13-desoxyterpendole I into terpendole I. TerF and terK are required for conversion of terpendole I to terpendole C which is further converted to terpendole K. In Tolypocladium album (Soil fungus), this protein is Cytochrome P450 monooxygeanse terQ.